A 697-amino-acid chain; its full sequence is Pentatricopeptide repeat-containing protein At2g13600 (697 aa).

16 PPR repeats span residues 18–53 (DSSP…GFSN), 54–84 (EIFI…MPQR), 85–115 (NIYT…MPER), 116–150 (DQCT…GFVL), 151–185 (NEYS…PFLS), 186–216 (DVYI…MGDR), 217–251 (NVVS…RVEP), 252–282 (DEVT…VVKN), 288–322 (DIIL…NVIA), 324–349 (TSMI…MAER), 350–384 (NVVS…SVCP), 385–419 (THYS…GFKF), 426–456 (DIFV…MMER), 457–491 (DCVS…GEKP), 492–527 (DHIT…GVAP), and 528–558 (LRDH…MPMQ). Positions 563–638 (IWGSLLAACK…QPGCSWIKIQ (76 aa)) are type E motif. The segment at 639–669 (GHDHVFMVKDKSHPRKKQIHSLLDILIAEMR) is type E(+) motif.

The protein belongs to the PPR family. PCMP-E subfamily.

The sequence is that of Pentatricopeptide repeat-containing protein At2g13600 (PCMP-E76) from Arabidopsis thaliana (Mouse-ear cress).